A 303-amino-acid chain; its full sequence is UDP-N-acetylenolpyruvoylglucosamine reductase (303 aa).

Positions 30–195 constitute an FAD-binding PCMH-type domain; sequence KTGGPADLLA…LSARFEMAKG (166 aa). The active site involves Arg174. Ser224 functions as the Proton donor in the catalytic mechanism. Glu294 is a catalytic residue.

It belongs to the MurB family. Requires FAD as cofactor.

Its subcellular location is the cytoplasm. It carries out the reaction UDP-N-acetyl-alpha-D-muramate + NADP(+) = UDP-N-acetyl-3-O-(1-carboxyvinyl)-alpha-D-glucosamine + NADPH + H(+). The protein operates within cell wall biogenesis; peptidoglycan biosynthesis. Cell wall formation. This chain is UDP-N-acetylenolpyruvoylglucosamine reductase, found in Latilactobacillus sakei subsp. sakei (strain 23K) (Lactobacillus sakei subsp. sakei).